Here is a 298-residue protein sequence, read N- to C-terminus: Tyrosine recombinase XerC (298 aa).

The 84-residue stretch at 1 to 84 (MNHIQEAFLN…TLRTFYEYWM (84 aa)) folds into the Core-binding (CB) domain. One can recognise a Tyr recombinase domain in the interval 105-286 (YLPQFFYEEE…SNQQLRKVYL (182 aa)). Residues Arg-145, Lys-169, His-238, Arg-241, and His-264 contribute to the active site. The O-(3'-phospho-DNA)-tyrosine intermediate role is filled by Tyr-273.

The protein belongs to the 'phage' integrase family. XerC subfamily. Forms a cyclic heterotetrameric complex composed of two molecules of XerC and two molecules of XerD.

It is found in the cytoplasm. Its function is as follows. Site-specific tyrosine recombinase, which acts by catalyzing the cutting and rejoining of the recombining DNA molecules. The XerC-XerD complex is essential to convert dimers of the bacterial chromosome into monomers to permit their segregation at cell division. It also contributes to the segregational stability of plasmids. The polypeptide is Tyrosine recombinase XerC (Staphylococcus aureus (strain MRSA252)).